The chain runs to 860 residues: Semaphorin-3aa (860 aa).

The N-terminal stretch at 1–17 is a signal peptide; it reads MDYLVGIFLLLCGVALP. Positions 31–515 constitute a Sema domain; that stretch reads RLKLSYNEML…SDLGISQMPL (485 aa). N53 carries N-linked (GlcNAc...) asparagine glycosylation. Residues C104 and C115 are joined by a disulfide bond. A glycan (N-linked (GlcNAc...) asparagine) is linked at N126. 4 cysteine pairs are disulfide-bonded: C133–C142, C270–C382, C294–C342, and C518–C536. The Ig-like C2-type domain maps to 579–668; it reads GYSSVEERSV…FIQPLRRINL (90 aa). An N-linked (GlcNAc...) asparagine glycan is attached at N593. Residues C652 and C717 are joined by a disulfide bond. The segment at 725 to 860 is disordered; that stretch reads KKPKGKKAPK…HEQQRPPRSV (136 aa). Polar residues-rich tracts occupy residues 748 to 764 and 782 to 818; these read TPQT…QRAQ and TGLQ…QPNQ. The span at 838–860 shows a compositional bias: basic and acidic residues; the sequence is QLQENKRGRNRRTHEQQRPPRSV.

It belongs to the semaphorin family.

It is found in the secreted. In terms of biological role, may influence outgrowth by a variety of growth cones including those of the posterior lateral line ganglion. This Danio rerio (Zebrafish) protein is Semaphorin-3aa (sema3aa).